We begin with the raw amino-acid sequence, 258 residues long: Trifolitoxin-processing protein TfxF (258 aa).

In terms of biological role, the actions of the proteins TfxB, TfxD and TfxF are implicated in the processing of the inactive trifolitoxin (TfxA) precursor into the active peptide. The protein is Trifolitoxin-processing protein TfxF (tfxF) of Rhizobium leguminosarum bv. trifolii.